The following is a 149-amino-acid chain: Transcriptional repressor NrdR (149 aa).

A zinc finger lies at 3–34; it reads CPFCSATDTKVIDSRLVAEGHQVRRRRECTEC. An ATP-cone domain is found at 49-139; it reads PRVIKRDGSR…VYRAFEDVSE (91 aa).

It belongs to the NrdR family. Zn(2+) is required as a cofactor.

Functionally, negatively regulates transcription of bacterial ribonucleotide reductase nrd genes and operons by binding to NrdR-boxes. This is Transcriptional repressor NrdR from Shewanella putrefaciens (strain CN-32 / ATCC BAA-453).